A 212-amino-acid chain; its full sequence is Uracil phosphoribosyltransferase (212 aa).

Residues R78, R103, and 130-138 each bind 5-phospho-alpha-D-ribose 1-diphosphate; that span reads DPMLATGSS. Uracil contacts are provided by residues I193 and 198–200; that span reads GDA. Residue D199 coordinates 5-phospho-alpha-D-ribose 1-diphosphate.

This sequence belongs to the UPRTase family. It depends on Mg(2+) as a cofactor.

The catalysed reaction is UMP + diphosphate = 5-phospho-alpha-D-ribose 1-diphosphate + uracil. Its pathway is pyrimidine metabolism; UMP biosynthesis via salvage pathway; UMP from uracil: step 1/1. Allosterically activated by GTP. Its function is as follows. Catalyzes the conversion of uracil and 5-phospho-alpha-D-ribose 1-diphosphate (PRPP) to UMP and diphosphate. In Pseudomonas fluorescens (strain ATCC BAA-477 / NRRL B-23932 / Pf-5), this protein is Uracil phosphoribosyltransferase.